The primary structure comprises 120 residues: Galanin-like peptide (120 aa).

The N-terminal stretch at 1–22 is a signal peptide; the sequence is MALTVPLIVLAVLLSLMESPAS. Positions 85–120 are excised as a propeptide; it reads SLGETFAKPDSGVTFVGVPDVVPWKRIRPGTTRFQI.

This sequence belongs to the galanin family.

The protein resides in the secreted. Its function is as follows. Hypothalamic neuropeptide which binds to the G-protein-coupled galanin receptors (GALR1, GALR2 and GALR3). Involved in a large number of putative physiological functions in CNS homeostatic processes, including the regulation of gonadotropin-releasing hormone secretion. The polypeptide is Galanin-like peptide (GALP) (Sus scrofa (Pig)).